Consider the following 409-residue polypeptide: Elongation factor Tu, chloroplastic (409 aa).

Residues 10–214 enclose the tr-type G domain; that stretch reads KPHVNIGTIG…TVDAYIPTPE (205 aa). Residues 19–26 are G1; that stretch reads GHVDHGKT. GTP is bound at residue 19–26; that stretch reads GHVDHGKT. Position 26 (threonine 26) interacts with Mg(2+). The segment at 60 to 64 is G2; it reads GITIN. Positions 81-84 are G3; sequence DCPG. GTP contacts are provided by residues 81–85 and 136–139; these read DCPGH and NKED. Residues 136-139 are G4; the sequence is NKED. The interval 174-176 is G5; it reads SAL.

The protein belongs to the TRAFAC class translation factor GTPase superfamily. Classic translation factor GTPase family. EF-Tu/EF-1A subfamily.

It is found in the plastid. The protein localises to the chloroplast. The catalysed reaction is GTP + H2O = GDP + phosphate + H(+). Its function is as follows. GTP hydrolase that promotes the GTP-dependent binding of aminoacyl-tRNA to the A-site of ribosomes during protein biosynthesis. In Pleurastrum terricola (Filamentous green alga), this protein is Elongation factor Tu, chloroplastic (tufA).